Here is a 429-residue protein sequence, read N- to C-terminus: DNA primase DnaG (429 aa).

One can recognise a Toprim domain in the interval 172-246; that stretch reads DSIIVVEGRN…DVDFIARAPP (75 aa). Positions 178, 220, and 222 each coordinate Mg(2+). The tract at residues 287–322 is disordered; sequence RNTKELEERQGNELKNERPEKINENEESEKNVELKE.

Belongs to the archaeal DnaG primase family. In terms of assembly, forms a ternary complex with MCM helicase and DNA. Component of the archaeal exosome complex. The cofactor is Mg(2+).

It carries out the reaction ssDNA + n NTP = ssDNA/pppN(pN)n-1 hybrid + (n-1) diphosphate.. Its function is as follows. RNA polymerase that catalyzes the synthesis of short RNA molecules used as primers for DNA polymerase during DNA replication. Also part of the exosome, which is a complex involved in RNA degradation. Acts as a poly(A)-binding protein that enhances the interaction between heteromeric, adenine-rich transcripts and the exosome. This is DNA primase DnaG from Picrophilus torridus (strain ATCC 700027 / DSM 9790 / JCM 10055 / NBRC 100828 / KAW 2/3).